We begin with the raw amino-acid sequence, 527 residues long: Transcription factor bHLH157 (527 aa).

Disordered stretches follow at residues 295-318 (SGVNQSKRRKLDTSSAHSSSLFPQ) and 335-368 (SSIGGNWKKPHEEGVKKKRAKAGESRRPRPKDRQ). Residues 307 to 318 (TSSAHSSSLFPQ) are compositionally biased toward polar residues. The Nuclear localization signal signature appears at 341-348 (WKKPHEEG). Basic and acidic residues predominate over residues 343-368 (KPHEEGVKKKRAKAGESRRPRPKDRQ). In terms of domain architecture, bHLH spans 354-403 (AKAGESRRPRPKDRQMIQDRIKELRGMIPNGAKCSIDTLLDLTIKHMVFM).

The protein belongs to the bHLH protein family. LHW subfamily. In terms of assembly, homodimer.

It localises to the nucleus. Functionally, transcription factor that may regulate root development. The polypeptide is Transcription factor bHLH157 (BHLH157) (Arabidopsis thaliana (Mouse-ear cress)).